A 381-amino-acid chain; its full sequence is Succinyl-diaminopimelate desuccinylase (381 aa).

Residue His69 coordinates Zn(2+). Asp71 is an active-site residue. Position 103 (Asp103) interacts with Zn(2+). Catalysis depends on Glu137, which acts as the Proton acceptor. 3 residues coordinate Zn(2+): Glu138, Glu166, and His355.

The protein belongs to the peptidase M20A family. DapE subfamily. As to quaternary structure, homodimer. Zn(2+) is required as a cofactor. Requires Co(2+) as cofactor.

It carries out the reaction N-succinyl-(2S,6S)-2,6-diaminopimelate + H2O = (2S,6S)-2,6-diaminopimelate + succinate. Its pathway is amino-acid biosynthesis; L-lysine biosynthesis via DAP pathway; LL-2,6-diaminopimelate from (S)-tetrahydrodipicolinate (succinylase route): step 3/3. Catalyzes the hydrolysis of N-succinyl-L,L-diaminopimelic acid (SDAP), forming succinate and LL-2,6-diaminopimelate (DAP), an intermediate involved in the bacterial biosynthesis of lysine and meso-diaminopimelic acid, an essential component of bacterial cell walls. The polypeptide is Succinyl-diaminopimelate desuccinylase (Rickettsia felis (strain ATCC VR-1525 / URRWXCal2) (Rickettsia azadi)).